The following is a 73-amino-acid chain: MGSFSIGHWLIVLAIIVLLFGAKKIPELAKGLGKGIKTFKAEMEDTTPEKSEKVEHKEESATSQKIEETTKNA.

The chain crosses the membrane as a helical span at residues 1 to 21; that stretch reads MGSFSIGHWLIVLAIIVLLFG. Residues 43–73 are disordered; it reads MEDTTPEKSEKVEHKEESATSQKIEETTKNA.

Belongs to the TatA/E family. As to quaternary structure, the Tat system comprises two distinct complexes: a TatABC complex, containing multiple copies of TatA, TatB and TatC subunits, and a separate TatA complex, containing only TatA subunits. Substrates initially bind to the TatABC complex, which probably triggers association of the separate TatA complex to form the active translocon.

The protein localises to the cell inner membrane. In terms of biological role, part of the twin-arginine translocation (Tat) system that transports large folded proteins containing a characteristic twin-arginine motif in their signal peptide across membranes. TatA could form the protein-conducting channel of the Tat system. In Campylobacter concisus (strain 13826), this protein is Sec-independent protein translocase protein TatA.